Reading from the N-terminus, the 612-residue chain is C4-dicarboxylate transport sensor protein DctB (612 aa).

2 helical membrane-spanning segments follow: residues 23–43 (SLVI…YFAE) and 292–312 (VLLI…LLTL). A coiled-coil region spans residues 328–376 (KRQLEERVLERTRELENANAQLQQEVHEREQAQRELMRAQDEVVQAGKL). The Histidine kinase domain maps to 385–599 (SISHELNQPL…VVRLHLLPGV (215 aa)). At histidine 388 the chain carries Phosphohistidine; by autocatalysis.

Post-translationally, autophosphorylated.

The protein localises to the cell inner membrane. It carries out the reaction ATP + protein L-histidine = ADP + protein N-phospho-L-histidine.. Member of the two-component regulatory system DctB/DctD, which regulates C4-dicarboxylate transport via regulation of expression of the dctPQM operon and dctA. DctB functions as a membrane-associated protein kinase that phosphorylates DctD in response to environmental signals. This is C4-dicarboxylate transport sensor protein DctB from Pseudomonas aeruginosa (strain ATCC 15692 / DSM 22644 / CIP 104116 / JCM 14847 / LMG 12228 / 1C / PRS 101 / PAO1).